We begin with the raw amino-acid sequence, 324 residues long: D-erythronate dehydrogenase (324 aa).

Positions 125, 149, and 153 each coordinate NAD(+). Catalysis depends on tyrosine 149, which acts as the Proton acceptor.

It belongs to the NAD(P)-dependent epimerase/dehydratase family.

It catalyses the reaction D-erythronate + NAD(+) = 2-dehydro-D-erythronate + NADH + H(+). Its function is as follows. Catalyzes oxidation of D-erythronate to 2-oxo-tetronate. Can use either NAD(+) or NADP(+) as cosubstrate, with a preference for NAD(+). The chain is D-erythronate dehydrogenase from Cupriavidus necator (strain ATCC 17699 / DSM 428 / KCTC 22496 / NCIMB 10442 / H16 / Stanier 337) (Ralstonia eutropha).